A 441-amino-acid chain; its full sequence is Arginine biosynthesis bifunctional protein ArgJ, mitochondrial (441 aa).

6 residues coordinate substrate: threonine 177, lysine 204, threonine 215, glutamate 301, asparagine 436, and serine 441. The Nucleophile role is filled by threonine 215.

Belongs to the ArgJ family. As to quaternary structure, heterodimer of an alpha and a beta chain. Post-translationally, the alpha and beta chains are autoproteolytically processed from a single precursor protein within the mitochondrion.

It localises to the mitochondrion matrix. It catalyses the reaction N(2)-acetyl-L-ornithine + L-glutamate = N-acetyl-L-glutamate + L-ornithine. The enzyme catalyses L-glutamate + acetyl-CoA = N-acetyl-L-glutamate + CoA + H(+). Its pathway is amino-acid biosynthesis; L-arginine biosynthesis; L-ornithine and N-acetyl-L-glutamate from L-glutamate and N(2)-acetyl-L-ornithine (cyclic): step 1/1. It participates in amino-acid biosynthesis; L-arginine biosynthesis; N(2)-acetyl-L-ornithine from L-glutamate: step 1/4. Catalyzes two activities which are involved in the cyclic version of arginine biosynthesis: the synthesis of acetylglutamate from glutamate and acetyl-CoA, and of ornithine by transacetylation between acetylornithine and glutamate. This chain is Arginine biosynthesis bifunctional protein ArgJ, mitochondrial, found in Candida glabrata (strain ATCC 2001 / BCRC 20586 / JCM 3761 / NBRC 0622 / NRRL Y-65 / CBS 138) (Yeast).